The following is a 472-amino-acid chain: N-succinylglutamate 5-semialdehyde dehydrogenase 1 (472 aa).

Residue 209 to 214 (GGVQAG) participates in NAD(+) binding. Residues Glu232 and Cys266 contribute to the active site.

Belongs to the aldehyde dehydrogenase family. AstD subfamily.

It catalyses the reaction N-succinyl-L-glutamate 5-semialdehyde + NAD(+) + H2O = N-succinyl-L-glutamate + NADH + 2 H(+). Its pathway is amino-acid degradation; L-arginine degradation via AST pathway; L-glutamate and succinate from L-arginine: step 4/5. Its function is as follows. Catalyzes the NAD-dependent reduction of succinylglutamate semialdehyde into succinylglutamate. In Caulobacter vibrioides (strain ATCC 19089 / CIP 103742 / CB 15) (Caulobacter crescentus), this protein is N-succinylglutamate 5-semialdehyde dehydrogenase 1.